The primary structure comprises 693 residues: Iron-sulfur clusters transporter atm1, mitochondrial (693 aa).

A mitochondrion-targeting transit peptide spans M1–Y28. The Mitochondrial matrix segment spans residues L29–R118. Residues V119–F140 traverse the membrane as a helical segment. One can recognise an ABC transmembrane type-1 domain in the interval V119–Q409. At K141–G163 the chain is on the mitochondrial intermembrane side. The helical transmembrane segment at A164–F187 threads the bilayer. Residues A188–I236 are Mitochondrial matrix-facing. A helical transmembrane segment spans residues L237–Y260. Position 261 (K261) is a topological domain, mitochondrial intermembrane. The chain crosses the membrane as a helical span at residues Y262–V282. Topologically, residues R283 to A348 are mitochondrial matrix. Residues R288–R292 and N351–Q354 contribute to the glutathione site. A helical transmembrane segment spans residues F349 to Y367. Topologically, residues M368–D382 are mitochondrial intermembrane. A helical transmembrane segment spans residues L383–Y404. G401 is a glutathione binding site. Over R405–A693 the chain is Mitochondrial matrix. The ABC transporter domain occupies I443–S679. ATP is bound by residues Y452 and G476–R487.

The protein belongs to the ABC transporter superfamily. ABCB family. Heavy Metal importer (TC 3.A.1.210) subfamily. Homodimer.

The protein localises to the mitochondrion inner membrane. Its function is as follows. Performs an essential function in the generation of cytoplasmic iron-sulfur proteins by mediating the ATP-dependent export of Fe/S cluster precursors synthesized by nfs1 and other mitochondrial proteins. Hydrolyzes ATP. Binds glutathione and may function by transporting a glutathione-conjugated iron-sulfur compound. This Schizosaccharomyces pombe (strain 972 / ATCC 24843) (Fission yeast) protein is Iron-sulfur clusters transporter atm1, mitochondrial.